Reading from the N-terminus, the 205-residue chain is MKKTTLKFAALTLLGLSNLALADAASELQMRLAKVDVLSAEFVQTVTSGSGKNVQQGSGKLQIKRPNLFRMETKTPQETQIISDGKTLWFYDPFVQQVTAQWVKNAVNNTPFVLLTSNDNSHWHQYTVTQQSDTFVLKPTLSTSNIKQFDIRVDANGILRNFSTTEKDGQTNLYVLRNITNQTLSDSLFQFKPEKGVEVDDQRKK.

Positions 1 to 22 (MKKTTLKFAALTLLGLSNLALA) are cleaved as a signal peptide.

Belongs to the LolA family. As to quaternary structure, monomer.

The protein resides in the periplasm. Functionally, participates in the translocation of lipoproteins from the inner membrane to the outer membrane. Only forms a complex with a lipoprotein if the residue after the N-terminal Cys is not an aspartate (The Asp acts as a targeting signal to indicate that the lipoprotein should stay in the inner membrane). This is Outer-membrane lipoprotein carrier protein from Haemophilus influenzae (strain PittEE).